A 184-amino-acid chain; its full sequence is Ras protein let-60 (184 aa).

10–17 (GDGGVGKS) contributes to the GTP binding site. The short motif at 32–40 (YDPTIEDSY) is the Effector region element. GTP-binding positions include 57-61 (DTAGQ) and 116-119 (NKCD). Cysteine 181 carries the post-translational modification Cysteine methyl ester. Cysteine 181 carries S-farnesyl cysteine lipidation. Residues 182 to 184 (QIM) constitute a propeptide, removed in mature form.

Belongs to the small GTPase superfamily. Ras family. In terms of assembly, interacts with soc-2. Interacts (in GTP-bound form) with plc-1 (via Ras-associating domain 1). In terms of tissue distribution, expressed in body wall muscles and in the nervous system including ganglion, nerve ring dorsal and ventral nerve cords, motor neurons and sensory tail neurons.

It is found in the cell membrane. The catalysed reaction is GTP + H2O = GDP + phosphate + H(+). GTP-binding protein with GTPase activity. The level of let-60 controls the switch between vulval and hypodermal cell fates during C.elegans vulval induction. May stimulate the guanine nucleotide exchange factor (GEF) activity of rap-1. May induce nuclear condensation. This chain is Ras protein let-60, found in Caenorhabditis elegans.